The following is a 385-amino-acid chain: Selenoprotein P (385 aa).

The first 19 residues, 1 to 19, serve as a signal peptide directing secretion; it reads MWRSLGLALALCLLPYGGA. A non-standard amino acid (selenocysteine) is located at residue selenocysteine 59. A cross-link (cysteinyl-selenocysteine (Sec-Cys); in isoform Se-P1) is located at residues 59–62; that stretch reads UYLC. Asparagine 83, asparagine 174, and asparagine 188 each carry an N-linked (GlcNAc...) asparagine glycan. 2 cysteine pairs are disulfide-bonded: cysteine 168/cysteine 186 and cysteine 172/cysteine 175. Positions 196–262 are disordered; sequence KTTEPSEEHN…KGQHRQGHLE (67 aa). The segment covering 243–258 has biased composition (basic residues); sequence LHHHHHHHKHKGQHRQ. A non-standard amino acid (selenocysteine) is located at residue selenocysteine 264. At serine 269 the chain carries Phosphoserine. Residues selenocysteine 282, selenocysteine 323, selenocysteine 335, and selenocysteine 357 are each a non-standard amino acid (selenocysteine). The tract at residues 357 to 385 is disordered; sequence UHSQHVSPTEASPNUSUNNKTKKUKUNLN. Residues 360–369 are compositionally biased toward polar residues; sequence QHVSPTEASP. Threonine 365 is a glycosylation site (O-linked (Hex...) threonine; partial). 4 non-standard amino acids (selenocysteine) are found at residues selenocysteine 371, selenocysteine 373, selenocysteine 380, and selenocysteine 382. Residues 376 to 385 are compositionally biased toward basic residues; sequence KTKKUKUNLN.

The protein belongs to the selenoprotein P family. Post-translationally, isoform Se-P1 contains several disulfide bridges and a selenide-sulfide bond between Sec-59 and Cys-62. These bonds are speculated to serve as redox-active pairs. In terms of processing, phosphorylation sites are present in the extracellular medium. As to expression, widely expressed, mainly by the liver. Secreted in plasma.

Its subcellular location is the secreted. Functionally, might be responsible for some of the extracellular antioxidant defense properties of selenium or might be involved in the transport of selenium. May supply selenium to tissues such as brain and testis. This chain is Selenoprotein P, found in Rattus norvegicus (Rat).